The sequence spans 439 residues: Xylose isomerase (439 aa).

Active-site residues include H103 and D106. Mg(2+)-binding residues include E234, E270, H273, D298, D309, D311, and D341.

This sequence belongs to the xylose isomerase family. In terms of assembly, homotetramer. Mg(2+) serves as cofactor.

It localises to the cytoplasm. It carries out the reaction alpha-D-xylose = alpha-D-xylulofuranose. The polypeptide is Xylose isomerase (Bacteroides fragilis (strain ATCC 25285 / DSM 2151 / CCUG 4856 / JCM 11019 / LMG 10263 / NCTC 9343 / Onslow / VPI 2553 / EN-2)).